The sequence spans 457 residues: Bifunctional protein GlmU (457 aa).

The pyrophosphorylase stretch occupies residues 1–229 (MYNCAIILAA…YEEIMGVNSR (229 aa)). Residues 8–11 (LAAG), lysine 22, glutamine 73, and 78–79 (GT) each bind UDP-N-acetyl-alpha-D-glucosamine. Aspartate 103 contributes to the Mg(2+) binding site. UDP-N-acetyl-alpha-D-glucosamine contacts are provided by glycine 140, glutamate 155, asparagine 170, and asparagine 227. Asparagine 227 is a binding site for Mg(2+). The tract at residues 230 to 250 (VQLSEAEIVMRKRINHKHMVN) is linker. Residues 251 to 457 (GVTFIDCEST…WLDKKGLLKK (207 aa)) are N-acetyltransferase. UDP-N-acetyl-alpha-D-glucosamine-binding residues include arginine 332 and lysine 350. The active-site Proton acceptor is the histidine 362. UDP-N-acetyl-alpha-D-glucosamine contacts are provided by tyrosine 365 and asparagine 376. Residues 385–386 (NY), alanine 422, and arginine 439 each bind acetyl-CoA.

The protein in the N-terminal section; belongs to the N-acetylglucosamine-1-phosphate uridyltransferase family. This sequence in the C-terminal section; belongs to the transferase hexapeptide repeat family. In terms of assembly, homotrimer. Mg(2+) serves as cofactor.

The protein resides in the cytoplasm. The enzyme catalyses alpha-D-glucosamine 1-phosphate + acetyl-CoA = N-acetyl-alpha-D-glucosamine 1-phosphate + CoA + H(+). The catalysed reaction is N-acetyl-alpha-D-glucosamine 1-phosphate + UTP + H(+) = UDP-N-acetyl-alpha-D-glucosamine + diphosphate. It participates in nucleotide-sugar biosynthesis; UDP-N-acetyl-alpha-D-glucosamine biosynthesis; N-acetyl-alpha-D-glucosamine 1-phosphate from alpha-D-glucosamine 6-phosphate (route II): step 2/2. It functions in the pathway nucleotide-sugar biosynthesis; UDP-N-acetyl-alpha-D-glucosamine biosynthesis; UDP-N-acetyl-alpha-D-glucosamine from N-acetyl-alpha-D-glucosamine 1-phosphate: step 1/1. The protein operates within bacterial outer membrane biogenesis; LPS lipid A biosynthesis. In terms of biological role, catalyzes the last two sequential reactions in the de novo biosynthetic pathway for UDP-N-acetylglucosamine (UDP-GlcNAc). The C-terminal domain catalyzes the transfer of acetyl group from acetyl coenzyme A to glucosamine-1-phosphate (GlcN-1-P) to produce N-acetylglucosamine-1-phosphate (GlcNAc-1-P), which is converted into UDP-GlcNAc by the transfer of uridine 5-monophosphate (from uridine 5-triphosphate), a reaction catalyzed by the N-terminal domain. This chain is Bifunctional protein GlmU, found in Clostridium botulinum (strain Kyoto / Type A2).